The following is a 181-amino-acid chain: Alkyl hydroperoxide reductase AhpD (181 aa).

C131 functions as the Proton donor in the catalytic mechanism. A disulfide bridge links C131 with C134. Residue C134 is the Cysteine sulfenic acid (-SOH) intermediate of the active site.

Belongs to the AhpD family.

The enzyme catalyses N(6)-[(R)-dihydrolipoyl]-L-lysyl-[lipoyl-carrier protein] + a hydroperoxide = N(6)-[(R)-lipoyl]-L-lysyl-[lipoyl-carrier protein] + an alcohol + H2O. In terms of biological role, antioxidant protein with alkyl hydroperoxidase activity. Required for the reduction of the AhpC active site cysteine residues and for the regeneration of the AhpC enzyme activity. The polypeptide is Alkyl hydroperoxide reductase AhpD (Rhodopseudomonas palustris (strain BisA53)).